A 287-amino-acid polypeptide reads, in one-letter code: Pantothenate synthetase (287 aa).

Position 30–37 (30–37 (MGALHSGH)) interacts with ATP. The active-site Proton donor is His-37. Gln-61 lines the (R)-pantoate pocket. Gln-61 contacts beta-alanine. An ATP-binding site is contributed by 152-155 (GQKD). Gln-158 contributes to the (R)-pantoate binding site. Residues Ile-181 and 189–192 (ESSR) contribute to the ATP site.

Belongs to the pantothenate synthetase family. As to quaternary structure, homodimer.

The protein resides in the cytoplasm. It catalyses the reaction (R)-pantoate + beta-alanine + ATP = (R)-pantothenate + AMP + diphosphate + H(+). It functions in the pathway cofactor biosynthesis; (R)-pantothenate biosynthesis; (R)-pantothenate from (R)-pantoate and beta-alanine: step 1/1. In terms of biological role, catalyzes the condensation of pantoate with beta-alanine in an ATP-dependent reaction via a pantoyl-adenylate intermediate. In Corynebacterium efficiens (strain DSM 44549 / YS-314 / AJ 12310 / JCM 11189 / NBRC 100395), this protein is Pantothenate synthetase.